Consider the following 93-residue polypeptide: U12-lycotoxin-Ls1c (93 aa).

The signal sequence occupies residues 1–18 (MKFAVILLFSLVVLAVAS). Positions 19-38 (ESVEEVRREIDIEDLPEQQR) are excised as a propeptide.

The protein belongs to the neurotoxin 31 family. Contains 5 disulfide bonds. As to expression, expressed by the venom gland.

It localises to the secreted. This chain is U12-lycotoxin-Ls1c, found in Lycosa singoriensis (Wolf spider).